The following is a 146-amino-acid chain: Cyanate hydratase (146 aa).

Active-site residues include Arg-87, Glu-90, and Ser-113.

This sequence belongs to the cyanase family.

The enzyme catalyses cyanate + hydrogencarbonate + 3 H(+) = NH4(+) + 2 CO2. In terms of biological role, catalyzes the reaction of cyanate with bicarbonate to produce ammonia and carbon dioxide. This Pseudomonas putida (strain ATCC 700007 / DSM 6899 / JCM 31910 / BCRC 17059 / LMG 24140 / F1) protein is Cyanate hydratase.